The following is a 414-amino-acid chain: Imidazolonepropionase (414 aa).

The Fe(3+) site is built by His-73 and His-75. Zn(2+) contacts are provided by His-73 and His-75. Residues Arg-82, Tyr-145, and His-178 each contribute to the 4-imidazolone-5-propanoate site. Tyr-145 contributes to the N-formimidoyl-L-glutamate binding site. His-249 serves as a coordination point for Fe(3+). His-249 contributes to the Zn(2+) binding site. Residue Gln-252 participates in 4-imidazolone-5-propanoate binding. Asp-324 contacts Fe(3+). Asp-324 contributes to the Zn(2+) binding site. N-formimidoyl-L-glutamate contacts are provided by Asn-326 and Gly-328. Position 329 (Ser-329) interacts with 4-imidazolone-5-propanoate.

It belongs to the metallo-dependent hydrolases superfamily. HutI family. The cofactor is Zn(2+). Fe(3+) is required as a cofactor.

Its subcellular location is the cytoplasm. The enzyme catalyses 4-imidazolone-5-propanoate + H2O = N-formimidoyl-L-glutamate. Its pathway is amino-acid degradation; L-histidine degradation into L-glutamate; N-formimidoyl-L-glutamate from L-histidine: step 3/3. Catalyzes the hydrolytic cleavage of the carbon-nitrogen bond in imidazolone-5-propanoate to yield N-formimidoyl-L-glutamate. It is the third step in the universal histidine degradation pathway. The protein is Imidazolonepropionase of Shewanella denitrificans (strain OS217 / ATCC BAA-1090 / DSM 15013).